An 822-amino-acid chain; its full sequence is Fibroblast growth factor receptor 4 (822 aa).

The N-terminal stretch at Met-1–Ala-35 is a signal peptide. 3 N-linked (GlcNAc...) asparagine glycosylation sites follow: Asn-13, Asn-72, and Asn-125. Topologically, residues Arg-36–Asp-388 are extracellular. Ig-like C2-type domains lie at Pro-39 to Ser-129, Pro-157 to Asp-259, and Pro-268 to Thr-368. A disulfide bridge links Cys-69 with Cys-114. A disordered region spans residues Ser-136–Pro-166. The cysteines at positions 191 and 243 are disulfide-linked. N-linked (GlcNAc...) asparagine glycans are attached at residues Asn-240, Asn-277, Asn-309, Asn-330, and Asn-341. Cys-290 and Cys-352 are disulfide-bonded. A helical membrane pass occupies residues Ile-389–Cys-409. Topologically, residues Arg-410 to Thr-822 are cytoplasmic. The Protein kinase domain occupies Leu-486–Leu-774. Residues Leu-492 to Val-500 and Lys-522 each bind ATP. Asp-631 serves as the catalytic Proton acceptor. Phosphotyrosine; by autocatalysis occurs at positions 661, 662, and 773.

Belongs to the protein kinase superfamily. Tyr protein kinase family. Fibroblast growth factor receptor subfamily. In terms of processing, ubiquitinated. Subject to proteasomal degradation when not fully glycosylated. Autophosphorylated. Binding of FGF family members together with heparan sulfate proteoglycan or heparin promotes receptor dimerization and autophosphorylation on tyrosine residues. Autophosphorylation occurs in trans between the two FGFR molecules present in the dimer.

The protein localises to the cell membrane. Its subcellular location is the endosome. The protein resides in the endoplasmic reticulum. It carries out the reaction L-tyrosyl-[protein] + ATP = O-phospho-L-tyrosyl-[protein] + ADP + H(+). Its activity is regulated as follows. Present in an inactive conformation in the absence of bound ligand. Ligand binding leads to dimerization and activation by autophosphorylation on tyrosine residues. Its function is as follows. Tyrosine-protein kinase that acts as a cell-surface receptor for fibroblast growth factors and plays a role in the regulation of cell proliferation, differentiation and migration, and in regulation of lipid metabolism, bile acid biosynthesis, glucose uptake, vitamin D metabolism and phosphate homeostasis. Required for normal down-regulation of the expression of CYP7A1, the rate-limiting enzyme in bile acid synthesis, in response to FGF19. Phosphorylates PLCG1 and FRS2. Ligand binding leads to the activation of several signaling cascades. Activation of PLCG1 leads to the production of the cellular signaling molecules diacylglycerol and inositol 1,4,5-trisphosphate. Phosphorylation of FRS2 triggers recruitment of GRB2, GAB1, PIK3R1 and SOS1, and mediates activation of RAS, MAPK1/ERK2, MAPK3/ERK1 and the MAP kinase signaling pathway, as well as of the AKT1 signaling pathway. In Pleurodeles waltl (Iberian ribbed newt), this protein is Fibroblast growth factor receptor 4 (FGFR4).